The sequence spans 286 residues: Diaminopimelate epimerase (286 aa).

Residues N13 and N66 each contribute to the substrate site. The active-site Proton donor is the C75. Substrate contacts are provided by residues 76 to 77, N165, N198, and 216 to 217; these read GN and ER. The Proton acceptor role is filled by C225. Residue 226-227 participates in substrate binding; the sequence is GT.

The protein belongs to the diaminopimelate epimerase family. In terms of assembly, homodimer.

The protein localises to the cytoplasm. It carries out the reaction (2S,6S)-2,6-diaminopimelate = meso-2,6-diaminopimelate. Its pathway is amino-acid biosynthesis; L-lysine biosynthesis via DAP pathway; DL-2,6-diaminopimelate from LL-2,6-diaminopimelate: step 1/1. Catalyzes the stereoinversion of LL-2,6-diaminopimelate (L,L-DAP) to meso-diaminopimelate (meso-DAP), a precursor of L-lysine and an essential component of the bacterial peptidoglycan. The protein is Diaminopimelate epimerase of Thermosynechococcus vestitus (strain NIES-2133 / IAM M-273 / BP-1).